We begin with the raw amino-acid sequence, 300 residues long: MDPQYARLVKAAALSATVLASILLIIKIFAWWHTGSVSLLAALVDSLVDLAASLTNLFVVRYSLQPADEEHTFGHGKAESLAALAQSMFISGSALFLFLTGFQHLASPEPLQDPGLGIWVTLIALFSTLILVTFQRWVVRKTQSQAIRADMLHYQSDVMMNGAILIALALSWYGFHRADALFALGIGAYILYSALRMGYEAVQALLDRALPDDERQEIINIVTSWPGVIGAHDLRTRQSGPTRFIQLHLEMEDMLPLMEAHILADQVERALLHRFPGADILIHQDPTAVVPKERHAHWEL.

4 helical membrane passes run 12 to 32 (AALSATVLASILLIIKIFAWW), 40 to 60 (LAALVDSLVDLAASLTNLFVV), 82 to 102 (AALAQSMFISGSALFLFLTGF), and 114 to 134 (PGLGIWVTLIALFSTLILVTF). Positions 45 and 49 each coordinate Zn(2+). Zn(2+) is bound by residues His-153 and Asp-157. The helical transmembrane segment at 164–184 (ILIALALSWYGFHRADALFAL) threads the bilayer.

Belongs to the cation diffusion facilitator (CDF) transporter (TC 2.A.4) family. FieF subfamily. In terms of assembly, homodimer.

The protein resides in the cell inner membrane. The enzyme catalyses Zn(2+)(in) + H(+)(out) = Zn(2+)(out) + H(+)(in). It catalyses the reaction Cd(2+)(in) + H(+)(out) = Cd(2+)(out) + H(+)(in). The catalysed reaction is Fe(2+)(in) + H(+)(out) = Fe(2+)(out) + H(+)(in). Divalent metal cation transporter which exports Zn(2+), Cd(2+) and possibly Fe(2+). May be involved in zinc and iron detoxification by efflux. The protein is Cation-efflux pump FieF of Yersinia enterocolitica serotype O:8 / biotype 1B (strain NCTC 13174 / 8081).